A 419-amino-acid polypeptide reads, in one-letter code: MNIASQIEDMGRRARAAGRRLAAASPAAKAGALDHLATLLEQRQDAILAANAADLAAAAEAGMDAPRMDRLRLTPATIAEMAAACRHVAALPDPVGAIETQWQRPNGLLVGKMRIPLGVIAMIYESRPNVTIDSAILCLKAGNAVILRGGSEAIHSNLALAALITEALSSVGLPAEAVQVVSTTDRAVIAELCKLEEHIDVIIPRGGETLIRAVVDMARMPVLKHYKGVCHAYIDSGADLAQAVEIIHNAKVQRPGVCNALEGLLVHRDEAAAFLPAIAERLGNDGVEFRACPASLPLLGDSAIPMKDEDNGQEFHDLILLVRIVDDMDEALAHIAAYGSNHTEIICTRDHGNAMRFLREADASMVAVNASSRFNDGGQLGLGAEIGISTSKLHSYGPMGVQELTTTKFVVFGAGQIRQ.

Belongs to the gamma-glutamyl phosphate reductase family.

The protein resides in the cytoplasm. It carries out the reaction L-glutamate 5-semialdehyde + phosphate + NADP(+) = L-glutamyl 5-phosphate + NADPH + H(+). Its pathway is amino-acid biosynthesis; L-proline biosynthesis; L-glutamate 5-semialdehyde from L-glutamate: step 2/2. In terms of biological role, catalyzes the NADPH-dependent reduction of L-glutamate 5-phosphate into L-glutamate 5-semialdehyde and phosphate. The product spontaneously undergoes cyclization to form 1-pyrroline-5-carboxylate. This is Gamma-glutamyl phosphate reductase from Nitratidesulfovibrio vulgaris (strain ATCC 29579 / DSM 644 / CCUG 34227 / NCIMB 8303 / VKM B-1760 / Hildenborough) (Desulfovibrio vulgaris).